Here is a 275-residue protein sequence, read N- to C-terminus: Non-heme chloroperoxidase CPO-A1 (275 aa).

In terms of domain architecture, AB hydrolase-1 spans 22–255 (PVVFIHGWPL…KVYEGSSHGI (234 aa)). Catalysis depends on charge relay system residues serine 95, aspartate 224, and histidine 253.

Belongs to the AB hydrolase superfamily. Bacterial non-heme haloperoxidase / perhydrolase family. In terms of assembly, homodimer.

With respect to regulation, brominating activity not inhibited by azide, peroxidase activity stimulated by bromide. Functionally, may be a chlorinating enzyme involved in 7-chlorotetracycline biosynthesis. Able to brominate as well. The sequence is that of Non-heme chloroperoxidase CPO-A1 (bpoA1) from Kitasatospora aureofaciens (Streptomyces aureofaciens).